The following is a 1581-amino-acid chain: Laminin subunit gamma-3 (1581 aa).

The signal sequence occupies residues 1 to 28; that stretch reads MAVSRVLSLLATVASMALVIQETHFAAG. One can recognise a Laminin N-terminal domain in the interval 40–279; the sequence is RAQRCLPEFE…AVSDFSVGGR (240 aa). N-linked (GlcNAc...) asparagine glycosylation occurs at Asn-128. 16 cysteine pairs are disulfide-bonded: Cys-280–Cys-289, Cys-282–Cys-299, Cys-301–Cys-310, Cys-313–Cys-333, Cys-336–Cys-345, Cys-338–Cys-361, Cys-364–Cys-373, Cys-376–Cys-389, Cys-392–Cys-404, Cys-394–Cys-410, Cys-412–Cys-421, Cys-424–Cys-436, Cys-439–Cys-450, Cys-441–Cys-457, Cys-459–Cys-468, and Cys-471–Cys-486. 4 Laminin EGF-like domains span residues 280 to 335, 336 to 391, 392 to 438, and 439 to 488; these read CKCN…ECLP, CNCS…PCQP, CDCH…GCRP, and CACN…GCSS. Asn-304 carries N-linked (GlcNAc...) asparagine glycosylation. Asn-337 is a glycosylation site (N-linked (GlcNAc...) asparagine). The Laminin EGF-like 5; first part domain occupies 489–498; the sequence is CFCYGHSKVC. The 177-residue stretch at 508–684 folds into the Laminin IV type A domain; the sequence is HIRSDFRHGA…LAPPASWVET (177 aa). N-linked (GlcNAc...) asparagine glycosylation occurs at Asn-640. The 34-residue stretch at 685–718 folds into the Laminin EGF-like 5; second part domain; sequence CLCPQGYTGQFCEFCALGYKREIPHGGPYANCIP. 24 cysteine pairs are disulfide-bonded: Cys-719-Cys-727, Cys-721-Cys-734, Cys-736-Cys-745, Cys-748-Cys-764, Cys-767-Cys-775, Cys-769-Cys-786, Cys-789-Cys-798, Cys-801-Cys-819, Cys-822-Cys-836, Cys-824-Cys-843, Cys-846-Cys-855, Cys-858-Cys-875, Cys-878-Cys-891, Cys-880-Cys-898, Cys-900-Cys-909, Cys-912-Cys-925, Cys-928-Cys-940, Cys-930-Cys-947, Cys-949-Cys-958, Cys-961-Cys-973, Cys-976-Cys-988, Cys-978-Cys-994, Cys-996-Cys-1005, and Cys-1008-Cys-1021. 6 Laminin EGF-like domains span residues 719–766, 767–821, 822–877, 878–927, 928–975, and 976–1024; these read CTCN…DCQP, CPCP…PCRR, CQCS…KCAP, CSCD…GCQS, CKCH…GCRD, and CRCS…CQEC. An N-linked (GlcNAc...) asparagine glycan is attached at Asn-849. N-linked (GlcNAc...) asparagine glycosylation is present at Asn-991. Residues 1025–1581 are domain II and I; the sequence is PTCYALVKEE…LSSLPENCAS (557 aa). Coiled-coil stretches lie at residues 1029-1046 and 1112-1153; these read ALVK…MLME and VHCA…LASL. Residues Asn-1162 and Asn-1196 are each glycosylated (N-linked (GlcNAc...) asparagine). The stretch at 1208 to 1231 forms a coiled coil; sequence RVASEAQQELEDRYQEVQAAQTAL. An N-linked (GlcNAc...) asparagine glycan is attached at Asn-1320. The tract at residues 1382-1413 is disordered; sequence KRKTKQAERMLGNAASLSSSTKKKSKEAELMS. Coiled-coil stretches lie at residues 1438–1468 and 1510–1575; these read ASQT…AKQV and AQTL…LSSL. N-linked (GlcNAc...) asparagine glycosylation is present at Asn-1514.

In terms of assembly, laminin is a complex glycoprotein, consisting of three different polypeptide chains (alpha, beta, gamma), which are bound to each other by disulfide bonds into a cross-shaped molecule comprising one long and three short arms with globules at each end. Gamma-3 is a subunit of laminin-12 (laminin-213), laminin-14 (laminin-423) and laminin-15 (laminin-523). Strongly expressed in capillaries and arterioles of kidney as well as in interstitial Leydig cells of testis.

The protein resides in the secreted. It is found in the extracellular space. The protein localises to the extracellular matrix. Its subcellular location is the basement membrane. Its function is as follows. Binding to cells via a high affinity receptor, laminin is thought to mediate the attachment, migration and organization of cells into tissues during embryonic development by interacting with other extracellular matrix components. The chain is Laminin subunit gamma-3 (Lamc3) from Mus musculus (Mouse).